Reading from the N-terminus, the 87-residue chain is Small ribosomal subunit protein bS20 (87 aa).

Over residues 1–15 the composition is skewed to basic residues; that stretch reads MANHKSAMKRIKQTA. The segment at 1–27 is disordered; sequence MANHKSAMKRIKQTAKRTERNKHERST. Residues 16–27 show a composition bias toward basic and acidic residues; the sequence is KRTERNKHERST.

The protein belongs to the bacterial ribosomal protein bS20 family.

In terms of biological role, binds directly to 16S ribosomal RNA. The protein is Small ribosomal subunit protein bS20 of Citrifermentans bemidjiense (strain ATCC BAA-1014 / DSM 16622 / JCM 12645 / Bem) (Geobacter bemidjiensis).